A 239-amino-acid polypeptide reads, in one-letter code: 1-(5-phosphoribosyl)-5-[(5-phosphoribosylamino)methylideneamino] imidazole-4-carboxamide isomerase (239 aa).

Asp-9 (proton acceptor) is an active-site residue. The active-site Proton donor is Asp-131.

It belongs to the HisA/HisF family.

It is found in the cytoplasm. It catalyses the reaction 1-(5-phospho-beta-D-ribosyl)-5-[(5-phospho-beta-D-ribosylamino)methylideneamino]imidazole-4-carboxamide = 5-[(5-phospho-1-deoxy-D-ribulos-1-ylimino)methylamino]-1-(5-phospho-beta-D-ribosyl)imidazole-4-carboxamide. It participates in amino-acid biosynthesis; L-histidine biosynthesis; L-histidine from 5-phospho-alpha-D-ribose 1-diphosphate: step 4/9. The sequence is that of 1-(5-phosphoribosyl)-5-[(5-phosphoribosylamino)methylideneamino] imidazole-4-carboxamide isomerase from Bacteroides thetaiotaomicron (strain ATCC 29148 / DSM 2079 / JCM 5827 / CCUG 10774 / NCTC 10582 / VPI-5482 / E50).